Consider the following 278-residue polypeptide: Digeranylgeranylglyceryl phosphate synthase (278 aa).

Helical transmembrane passes span 12-32 (LKNC…ASYF), 34-54 (LATV…CGFG), 91-111 (LLVF…LMAV), 129-149 (IIGN…GGIA), 153-173 (IDVT…REII), 204-224 (FLLV…FFGI), 225-245 (YYML…YNLV), and 257-277 (SRNI…GSLF).

This sequence belongs to the UbiA prenyltransferase family. DGGGP synthase subfamily. Mg(2+) serves as cofactor.

It localises to the cell membrane. It catalyses the reaction sn-3-O-(geranylgeranyl)glycerol 1-phosphate + (2E,6E,10E)-geranylgeranyl diphosphate = 2,3-bis-O-(geranylgeranyl)-sn-glycerol 1-phosphate + diphosphate. Its pathway is membrane lipid metabolism; glycerophospholipid metabolism. Functionally, prenyltransferase that catalyzes the transfer of the geranylgeranyl moiety of geranylgeranyl diphosphate (GGPP) to the C2 hydroxyl of (S)-3-O-geranylgeranylglyceryl phosphate (GGGP). This reaction is the second ether-bond-formation step in the biosynthesis of archaeal membrane lipids. The sequence is that of Digeranylgeranylglyceryl phosphate synthase from Methanococcus maripaludis (strain C7 / ATCC BAA-1331).